A 155-amino-acid chain; its full sequence is 6,7-dimethyl-8-ribityllumazine synthase (155 aa).

Residues Trp18, Ala52 to Glu54, and Leu76 to Val78 each bind 5-amino-6-(D-ribitylamino)uracil. Arg84 acts as the Proton donor in catalysis. Ser109 contributes to the 5-amino-6-(D-ribitylamino)uracil binding site. His123 is a binding site for (2S)-2-hydroxy-3-oxobutyl phosphate.

This sequence belongs to the DMRL synthase family.

It carries out the reaction (2S)-2-hydroxy-3-oxobutyl phosphate + 5-amino-6-(D-ribitylamino)uracil = 6,7-dimethyl-8-(1-D-ribityl)lumazine + phosphate + 2 H2O + H(+). The protein operates within cofactor biosynthesis; riboflavin biosynthesis; riboflavin from 2-hydroxy-3-oxobutyl phosphate and 5-amino-6-(D-ribitylamino)uracil: step 1/2. Functionally, catalyzes the formation of 6,7-dimethyl-8-ribityllumazine by condensation of 5-amino-6-(D-ribitylamino)uracil with 3,4-dihydroxy-2-butanone 4-phosphate. This is the penultimate step in the biosynthesis of riboflavin. This Rhodococcus erythropolis (Arthrobacter picolinophilus) protein is 6,7-dimethyl-8-ribityllumazine synthase.